The chain runs to 1288 residues: Photoreceptor cilium actin regulator (1288 aa).

Glycine 2 is lipidated: N-myristoyl glycine. The S-palmitoyl cysteine moiety is linked to residue cysteine 3. Disordered regions lie at residues 78–147 (MGDP…KWKR), 368–401 (QTSW…QQSP), 423–453 (QPRA…LGTS), 467–527 (PHLS…PFQA), 563–605 (DWSE…SHVE), 686–707 (QKCN…NAIP), 813–1109 (AAKS…EDSQ), 1132–1169 (EAKP…SSGP), and 1190–1288 (LRRT…EEVS). Polar residues-rich tracts occupy residues 96 to 109 (TKTS…SQSH), 382 to 401 (SVTS…QQSP), and 434 to 453 (CLSS…LGTS). Over residues 483–495 (DSEDSSPEEEEED) the composition is skewed to acidic residues. Polar residues-rich tracts occupy residues 848-857 (SPESSKSTEN), 894-904 (SKSTASLTKPH), 927-946 (PPAT…QAEK), and 966-976 (PSGQNRTSESS). Residues 1018-1028 (PAQPSPSAVQT) show a composition bias toward low complexity. Composition is skewed to pro residues over residues 1051-1063 (PHQP…PPES) and 1071-1094 (PSPP…PPMS). Residues 1097–1106 (QEHKETRDSE) show a composition bias toward basic and acidic residues. Positions 1209 to 1226 (DPTSTSYESQLGQNSSSE) are enriched in polar residues. Basic and acidic residues predominate over residues 1268–1277 (RTGHIQDKSQ). A compositionally biased stretch (polar residues) spans 1278-1288 (PEAQPQQEEVS).

In terms of tissue distribution, specifically expressed in retina.

The protein localises to the cell projection. It is found in the cilium. The protein resides in the photoreceptor outer segment. Its subcellular location is the photoreceptor inner segment. Its function is as follows. Plays an essential role for normal photoreceptor cell maintenance and vision. This is Photoreceptor cilium actin regulator from Homo sapiens (Human).